The primary structure comprises 665 residues: Phosphatidylinositol-3-phosphate phosphatase MTMR1 (665 aa).

Residue methionine 1 is modified to N-acetylmethionine. Positions 1–11 (MDRPAAAAAAG) are enriched in low complexity. Residues 1–51 (MDRPAAAAAAGCEGGGGPNPGPAGGRRPPRAAGGATAGSRQPSVETLDSPT) form a disordered region. Residues 12-24 (CEGGGGPNPGPAG) are compositionally biased toward gly residues. A compositionally biased stretch (polar residues) spans 39 to 51 (SRQPSVETLDSPT). Residues serine 43 and serine 49 each carry the phosphoserine modification. In terms of domain architecture, GRAM spans 90-161 (NKLAQMEEAP…GVISRVEKIG (72 aa)). Residues 226–601 (GWKVYDPVSE…SHLELWVNYY (376 aa)) enclose the Myotubularin phosphatase domain. Positions 351, 376, and 377 each coordinate a 1,2-diacyl-sn-glycero-3-phospho-(1D-myo-inositol-3-phosphate). Catalysis depends on cysteine 438, which acts as the Phosphocysteine intermediate. Residues serine 439, aspartate 440, glycine 441, tryptophan 442, aspartate 443, arginine 444, and arginine 484 each coordinate a 1,2-diacyl-sn-glycero-3-phospho-(1D-myo-inositol-3-phosphate). Residue serine 439 coordinates phosphate. Residues glycine 441, tryptophan 442, aspartate 443, and arginine 444 each contribute to the phosphate site. Residues 608–665 (MRPQMPIHQNLKELLAVRAELQKRVEGLQREVATRAVSSSSERGSSPSHSATSVHTSV) form a required for dimerization region. The interval 642 to 665 (RAVSSSSERGSSPSHSATSVHTSV) is disordered. Residues 645–657 (SSSSERGSSPSHS) are compositionally biased toward low complexity.

The protein belongs to the protein-tyrosine phosphatase family. Non-receptor class myotubularin subfamily. In terms of assembly, homodimer.

The protein resides in the cell membrane. Its subcellular location is the cytoplasm. It catalyses the reaction a 1,2-diacyl-sn-glycero-3-phospho-(1D-myo-inositol-3-phosphate) + H2O = a 1,2-diacyl-sn-glycero-3-phospho-(1D-myo-inositol) + phosphate. It carries out the reaction 1,2-dioctanoyl-sn-glycero-3-phospho-(1-D-myo-inositol-3-phosphate) + H2O = 1,2-dioctanoyl-sn-glycero-3-phospho-(1D-myo-inositol) + phosphate. The catalysed reaction is a 1,2-diacyl-sn-glycero-3-phospho-(1D-myo-inositol-3,5-bisphosphate) + H2O = a 1,2-diacyl-sn-glycero-3-phospho-(1D-myo-inositol-5-phosphate) + phosphate. Its function is as follows. Lipid phosphatase that specifically dephosphorylates the D-3 position of phosphatidylinositol 3-phosphate, generating phosphatidylinositol. Could also dephosphorylate phosphatidylinositol 3,5-bisphosphate to produce phosphatidylinositol 5-phosphate. The chain is Phosphatidylinositol-3-phosphate phosphatase MTMR1 from Homo sapiens (Human).